A 650-amino-acid chain; its full sequence is DNA ligase (650 aa).

Residues 30–34 and 79–80 each bind NAD(+); these read DEQYD and SL. Catalysis depends on Lys-110, which acts as the N6-AMP-lysine intermediate. Positions 131, 165, and 304 each coordinate NAD(+). Positions 398, 401, 414, and 419 each coordinate Zn(2+). The 78-residue stretch at 573–650 folds into the BRCT domain; it reads DNNNVFFNKT…EEEFLAQINK (78 aa).

It belongs to the NAD-dependent DNA ligase family. LigA subfamily. Mg(2+) is required as a cofactor. It depends on Mn(2+) as a cofactor.

The catalysed reaction is NAD(+) + (deoxyribonucleotide)n-3'-hydroxyl + 5'-phospho-(deoxyribonucleotide)m = (deoxyribonucleotide)n+m + AMP + beta-nicotinamide D-nucleotide.. In terms of biological role, DNA ligase that catalyzes the formation of phosphodiester linkages between 5'-phosphoryl and 3'-hydroxyl groups in double-stranded DNA using NAD as a coenzyme and as the energy source for the reaction. It is essential for DNA replication and repair of damaged DNA. The protein is DNA ligase of Helicobacter hepaticus (strain ATCC 51449 / 3B1).